Reading from the N-terminus, the 171-residue chain is RNA pyrophosphohydrolase (171 aa).

The 144-residue stretch at 6–149 (GFRPNVGIIL…KREVYRRALK (144 aa)) folds into the Nudix hydrolase domain. The Nudix box signature appears at 39-60 (GGIKESESAEQALYRELQEEVG).

This sequence belongs to the Nudix hydrolase family. RppH subfamily. A divalent metal cation is required as a cofactor.

Functionally, accelerates the degradation of transcripts by removing pyrophosphate from the 5'-end of triphosphorylated RNA, leading to a more labile monophosphorylated state that can stimulate subsequent ribonuclease cleavage. The polypeptide is RNA pyrophosphohydrolase (Teredinibacter turnerae (strain ATCC 39867 / T7901)).